Reading from the N-terminus, the 250-residue chain is Solute carrier family 66 member 2 (250 aa).

In terms of domain architecture, PQ-loop 1 spans 14-80; sequence RMLVSWGASC…HHFESPLLWQ (67 aa). Transmembrane regions (helical) follow at residues 15–35, 49–69, 72–92, 118–138, 151–173, and 212–232; these read MLVS…PYIP, FSIY…LFWF, HFES…LLML, FFWH…FTGV, LFVE…PQLY, and FSIC…QVYL. Positions 149 to 215 constitute a PQ-loop 2 domain; the sequence is SPLFVEILGF…NQAPFQFSIC (67 aa).

Its subcellular location is the membrane. The chain is Solute carrier family 66 member 2 (slc66a2) from Xenopus laevis (African clawed frog).